The sequence spans 873 residues: Coatomer subunit gamma-2 (873 aa).

Positions 1 to 11 (MIKKFDKKDEE) are enriched in basic and acidic residues. The interval 1-21 (MIKKFDKKDEESGSGSNPFQH) is disordered. 6 HEAT repeats span residues 64–101 (TEAT…ISED), 283–320 (RELA…KHPS), 321–355 (AVTA…GSES), 356–392 (SVDR…KYPR), 395–430 (SVMM…ENPE), and 467–504 (PTPS…QNDD).

The protein belongs to the COPG family. As to quaternary structure, oligomeric complex.

It is found in the cytoplasm. Its subcellular location is the golgi apparatus membrane. The protein resides in the cytoplasmic vesicle. It localises to the COPI-coated vesicle membrane. Its function is as follows. The coatomer is a cytosolic protein complex that binds to dilysine motifs and reversibly associates with Golgi non-clathrin-coated vesicles, which further mediate biosynthetic protein transport from the ER, via the Golgi up to the trans Golgi network. Coatomer complex is required for budding from Golgi membranes, and is essential for the retrograde Golgi-to-ER transport of dilysine-tagged proteins. The polypeptide is Coatomer subunit gamma-2 (copg2) (Danio rerio (Zebrafish)).